The chain runs to 279 residues: Pantothenate synthetase (279 aa).

31–38 contributes to the ATP binding site; the sequence is MGALHEGH. H38 (proton donor) is an active-site residue. Residue Q62 participates in (R)-pantoate binding. Q62 lines the beta-alanine pocket. 148–151 is an ATP binding site; the sequence is GEKD. Q154 provides a ligand contact to (R)-pantoate. Residues V177 and 185–188 contribute to the ATP site; that span reads LSSR.

It belongs to the pantothenate synthetase family. Homodimer.

The protein localises to the cytoplasm. It carries out the reaction (R)-pantoate + beta-alanine + ATP = (R)-pantothenate + AMP + diphosphate + H(+). It participates in cofactor biosynthesis; (R)-pantothenate biosynthesis; (R)-pantothenate from (R)-pantoate and beta-alanine: step 1/1. In terms of biological role, catalyzes the condensation of pantoate with beta-alanine in an ATP-dependent reaction via a pantoyl-adenylate intermediate. The protein is Pantothenate synthetase of Cereibacter sphaeroides (strain ATCC 17029 / ATH 2.4.9) (Rhodobacter sphaeroides).